Here is a 305-residue protein sequence, read N- to C-terminus: tRNA pseudouridine synthase B (305 aa).

Aspartate 41 serves as the catalytic Nucleophile.

This sequence belongs to the pseudouridine synthase TruB family. Type 1 subfamily.

It catalyses the reaction uridine(55) in tRNA = pseudouridine(55) in tRNA. Responsible for synthesis of pseudouridine from uracil-55 in the psi GC loop of transfer RNAs. This Prochlorococcus marinus (strain MIT 9515) protein is tRNA pseudouridine synthase B.